Consider the following 266-residue polypeptide: 5'-nucleotidase SurE (266 aa).

Residues D8, D9, S39, and N93 each coordinate a divalent metal cation.

Belongs to the SurE nucleotidase family. A divalent metal cation serves as cofactor.

The protein localises to the cytoplasm. It carries out the reaction a ribonucleoside 5'-phosphate + H2O = a ribonucleoside + phosphate. Its function is as follows. Nucleotidase that shows phosphatase activity on nucleoside 5'-monophosphates. The protein is 5'-nucleotidase SurE of Pyrobaculum arsenaticum (strain DSM 13514 / JCM 11321 / PZ6).